The primary structure comprises 475 residues: Probable L-cysteine desulfhydrase, chloroplastic (475 aa).

The transit peptide at 1–24 (MASSLSPPEEASYHHRHTKRYTSS) directs the protein to the chloroplast. A disordered region spans residues 1-40 (MASSLSPPEEASYHHRHTKRYTSSASSASSTTNGTVESSV). Positions 22–32 (TSSASSASSTT) are enriched in low complexity. An N6-(pyridoxal phosphate)lysine modification is found at K284.

This sequence belongs to the class-V pyridoxal-phosphate-dependent aminotransferase family. As to quaternary structure, interacts in vitro with QS.

It localises to the plastid. Its subcellular location is the chloroplast. Its function is as follows. May catalyze the production of hydrogen sulfide (H2S) from cysteine. This is Probable L-cysteine desulfhydrase, chloroplastic from Arabidopsis thaliana (Mouse-ear cress).